The primary structure comprises 622 residues: Signal recognition particle subunit SRP68 (622 aa).

Residues 576 to 622 form a disordered region; that stretch reads RDATPKKAAKGSSAAAASSKTSNQEEEEQQGLTGMLSGWKKSFWGNK. Over residues 585–595 the composition is skewed to low complexity; that stretch reads KGSSAAAASSK.

It belongs to the SRP68 family. In terms of assembly, heterodimer with srpa-72. Srpa-68/srpa-72 heterodimer formation is stabilized by the presence of 7SL RNA. Component of a signal recognition particle (SRP) complex that consists of a 7SL RNA molecule of 300 nucleotides and six protein subunits: srpa-72, srpa-68, SRP54, F37F2.2/SRP19, F25G6.8/SRP14 and ZK512.4/SRP9. Within the SRP complex, interacts (via C-terminus) with srpa-72 (via N-terminus).

Its subcellular location is the cytoplasm. It localises to the nucleus. The protein localises to the nucleolus. The protein resides in the endoplasmic reticulum. Its function is as follows. Component of the signal recognition particle (SRP) complex, a ribonucleoprotein complex that mediates the cotranslational targeting of secretory and membrane proteins to the endoplasmic reticulum (ER). The SRP complex interacts with the signal sequence in nascent secretory and membrane proteins and directs them to the membrane of the ER. The SRP complex targets the ribosome-nascent chain complex to the SRP receptor (SR), which is anchored in the ER, where SR compaction and GTPase rearrangement drive cotranslational protein translocation into the ER. Binds the signal recognition particle RNA (7SL RNA), srpa-72 binds to this complex subsequently. The SRP complex possibly participates in the elongation arrest function. This is Signal recognition particle subunit SRP68 from Caenorhabditis elegans.